Reading from the N-terminus, the 72-residue chain is Cytochrome b-c1 complex subunit 8-2, mitochondrial (72 aa).

Over 1-41 the chain is Mitochondrial matrix; the sequence is MGKQPVKLKAVVYALSPFQQKIMTGLWKDLPEKIHHKVSEN. A helical membrane pass occupies residues 42-58; it reads WISTILLVAPVVGTYSY. Residues 59–72 lie on the Mitochondrial intermembrane side of the membrane; sequence AQYFKEQEKLEHRF.

The protein belongs to the UQCRQ/QCR8 family. Component of the ubiquinol-cytochrome c oxidoreductase (cytochrome b-c1 complex, complex III, CIII), a multisubunit enzyme composed of 10 subunits. The complex is composed of 3 respiratory subunits cytochrome b (MT-CYB), cytochrome c1 (CYC1-1 or CYC1-2) and Rieske protein (UCR1-1 or UCR1-2), 2 core protein subunits MPPalpha1 (or MPPalpha2) and MPPB, and 5 low-molecular weight protein subunits QCR7-1 (or QCR7-2), UCRQ-1 (or UCRQ-2), QCR9, UCRY and probably QCR6-1 (or QCR6-2). The complex exists as an obligatory dimer and forms supercomplexes (SCs) in the inner mitochondrial membrane with NADH-ubiquinone oxidoreductase (complex I, CI), resulting in different assemblies (supercomplexes SCI(1)III(2) and SCI(2)III(4)).

The protein resides in the mitochondrion inner membrane. In terms of biological role, component of the ubiquinol-cytochrome c oxidoreductase, a multisubunit transmembrane complex that is part of the mitochondrial electron transport chain which drives oxidative phosphorylation. The respiratory chain contains 3 multisubunit complexes succinate dehydrogenase (complex II, CII), ubiquinol-cytochrome c oxidoreductase (cytochrome b-c1 complex, complex III, CIII) and cytochrome c oxidase (complex IV, CIV), that cooperate to transfer electrons derived from NADH and succinate to molecular oxygen, creating an electrochemical gradient over the inner membrane that drives transmembrane transport and the ATP synthase. The cytochrome b-c1 complex catalyzes electron transfer from ubiquinol to cytochrome c, linking this redox reaction to translocation of protons across the mitochondrial inner membrane, with protons being carried across the membrane as hydrogens on the quinol. In the process called Q cycle, 2 protons are consumed from the matrix, 4 protons are released into the intermembrane space and 2 electrons are passed to cytochrome c. In Arabidopsis thaliana (Mouse-ear cress), this protein is Cytochrome b-c1 complex subunit 8-2, mitochondrial (UCRQ-2).